A 256-amino-acid chain; its full sequence is Trans-aconitate 2-methyltransferase (256 aa).

The protein belongs to the methyltransferase superfamily. Tam family.

It is found in the cytoplasm. It carries out the reaction trans-aconitate + S-adenosyl-L-methionine = (E)-3-(methoxycarbonyl)pent-2-enedioate + S-adenosyl-L-homocysteine. Its function is as follows. Catalyzes the S-adenosylmethionine monomethyl esterification of trans-aconitate. The chain is Trans-aconitate 2-methyltransferase from Rhizobium rhizogenes (strain K84 / ATCC BAA-868) (Agrobacterium radiobacter).